A 265-amino-acid polypeptide reads, in one-letter code: Apolipoprotein A-I (265 aa).

An N-terminal signal peptide occupies residues 1–18 (MKAVVLTLAVLFLTGSQA). 2 tandem repeats follow at residues 67–88 (LKLL…EQLG) and 89–110 (PVTR…QEMN). A 10 X approximate tandem repeats region spans residues 67-265 (LKLLDNWDSL…DEASKKLNAQ (199 aa)). Position 109 is a methionine sulfoxide (methionine 109). One copy of the 3; half-length repeat lies at 111 to 121 (KDLQEVKQKVQ). 5 repeat units span residues 122-142 (PYLD…RQKV), 144-165 (PLGE…DKLT), 166-187 (PLAE…QQLA), 188-209 (PYSD…EGGG), and 210-230 (SLVQ…EKAK). The 9; half-length repeat unit spans residues 231–241 (PALEDLRQGLL). Repeat 10 spans residues 242-265 (PVLENLKVSILAAIDEASKKLNAQ).

This sequence belongs to the apolipoprotein A1/A4/E family. Homodimer. Interacts with APOA1BP and CLU. Component of a sperm activating protein complex (SPAP), consisting of APOA1, an immunoglobulin heavy chain, an immunoglobulin light chain and albumin. Interacts with NDRG1. Interacts with SCGB3A2. Interacts with NAXE and YJEFN3. Post-translationally, glycosylated. In terms of processing, palmitoylated. Phosphorylation sites are present in the extracellular medium. Major protein of plasma HDL, also found in chylomicrons.

The protein localises to the secreted. Functionally, participates in the reverse transport of cholesterol from tissues to the liver for excretion by promoting cholesterol efflux from tissues and by acting as a cofactor for the lecithin cholesterol acyltransferase (LCAT). As part of the SPAP complex, activates spermatozoa motility. The chain is Apolipoprotein A-I (APOA1) from Balaenoptera acutorostrata scammoni (North Pacific minke whale).